A 272-amino-acid chain; its full sequence is MSSYLQEARTKAVTIPSLLAMKERGEKITMLTAYDASFASMMDTCGVEMILIGDSLGMVCQGHNSTLPVTIEDVAYHTACVARGSKTAFVMSDMPFGSYATKEEAFKNAVKLVQAGAQMVKIEGGAWMADTVRFLTERAIPVMVHLGLTPQFVHQFGGYKVQGKTAEAAEKMKSEALLLQEAGADMLLLEAIPASLGKELTELVKMPTIGIGAGPDCSGQVLVLHDYINVFPGKKARFVRNFMEGQTSIEGATRAYVAAVKDGSFPAPEHCF.

Mg(2+)-binding residues include aspartate 54 and aspartate 93. 3-methyl-2-oxobutanoate is bound by residues 54 to 55 (DS), aspartate 93, and lysine 121. Glutamate 123 is a binding site for Mg(2+). Glutamate 190 acts as the Proton acceptor in catalysis.

The protein belongs to the PanB family. In terms of assembly, homodecamer; pentamer of dimers. It depends on Mg(2+) as a cofactor.

It is found in the cytoplasm. The enzyme catalyses 3-methyl-2-oxobutanoate + (6R)-5,10-methylene-5,6,7,8-tetrahydrofolate + H2O = 2-dehydropantoate + (6S)-5,6,7,8-tetrahydrofolate. It participates in cofactor biosynthesis; (R)-pantothenate biosynthesis; (R)-pantoate from 3-methyl-2-oxobutanoate: step 1/2. Catalyzes the reversible reaction in which hydroxymethyl group from 5,10-methylenetetrahydrofolate is transferred onto alpha-ketoisovalerate to form ketopantoate. The sequence is that of 3-methyl-2-oxobutanoate hydroxymethyltransferase from Janthinobacterium sp. (strain Marseille) (Minibacterium massiliensis).